Consider the following 424-residue polypeptide: Omega-6 fatty acid desaturase, chloroplastic (424 aa).

A chloroplast-targeting transit peptide spans 1-63 (MACTLADSLL…TRNKVTVIHA (63 aa)). Val64 is subject to N-acetylvaline. Positions 165 to 169 (HDCAH) match the Histidine box-1 motif. The Histidine box-2 motif lies at 201 to 205 (HDRHH). The short motif at 361–365 (HIPHH) is the Histidine box-3 element.

Belongs to the fatty acid desaturase type 1 family.

It localises to the plastid. The protein resides in the chloroplast membrane. The catalysed reaction is a (9Z)-octadecenoyl-containing glycerolipid + 2 reduced [2Fe-2S]-[ferredoxin] + O2 + 2 H(+) = a (9Z,12Z)-octadecadienoyl-containing glycerolipid + 2 oxidized [2Fe-2S]-[ferredoxin] + 2 H2O. It functions in the pathway lipid metabolism; polyunsaturated fatty acid biosynthesis. Functionally, chloroplast omega-6 fatty acid desaturase introduces the second double bond in the biosynthesis of 16:3 and 18:3 fatty acids, important constituents of plant membranes. It is thought to use ferredoxin as an electron donor and to act on fatty acids esterified to galactolipids, sulfolipids and phosphatidylglycerol. The chain is Omega-6 fatty acid desaturase, chloroplastic from Glycine max (Soybean).